We begin with the raw amino-acid sequence, 884 residues long: MGTPTPYSAHSPRDSESSYFSHTSPPHGEHEHDEQEQSLLERNNSSHYGTPFDDPAVSTDSLRRYTLHDDGPAVFAAPPYQESEAASENTFRARSNGDKASREGSRAGALRRYGTRKINLVQGSVLSVDYPVPSAIQNAIQPQYRDAEEAFSEEFTHMRYTAATCDPDEFTLRNGYNLRPAIYNRHTELLIAITYYNEDKVLTARTLHGVMQNIRDIVNLKKSEFWNKGGPAWQKIVVCLVFDGIEPCDKNTLDVLATIGIYQDGVMKKDVDGRETVAHVFEYTTQLSVTPTQQLIRPQGNESTNLPPVQMIFCLKQKNSKKINSHRWLFNAFSRILNPEVVILLDAGTKPGHKSLLALWEAFYNDKTLGGACGEIHAMLGQGWRKVINPLVAAQNFEYKISNILDKPLESAFGYVSVLPGAFSAYRYRAIMGRPLEQYFHGDHTLSKRLGKKGIDGMNIFKKNMFLAEDRILCFELVAKAGFKWHLSYVKASKGETDVPEGAAEFISQRRRWLNGSFAAGLYAIMHFGRIYRSGHSIIRMFFLHIQMLYNVCQLIMTWFSLASYWLTSSVIMDLVGTPSTSNKNKGWPWGNEASPIVNNFVKYGYVWVLTLQFIMALGNRPKGVKIPYILSYLYFSLVQLYVLILSFYLVVGAFNGGMMDFNFDEGVGTFLSSFFSSSGGGIVLIALVSTYGIYIIASVLYMDPWHIITSSWAYFLGMTTSINILMVYAFCNWHDVSWGTKGSDKAEALPSAQTKKDDDNKQNFIEEIDKPQADIDSQFEATVKRALTPWIEPEEEGGKSLDDAYRNFRTVLVCLWVFSNLLVTLLITATGVDKMCLTNTSTTRTSWYFEVILWITAGLSLFRFIGSLWFLGRSGILCCVSRR.

2 disordered regions span residues 1–58 (MGTP…PAVS) and 73–108 (AVFA…SRAG). Composition is skewed to polar residues over residues 37–48 (QSLLERNNSSHY) and 84–93 (EAASENTFRA). N-linked (GlcNAc...) asparagine glycosylation occurs at Asn-44. Residues 95 to 105 (SNGDKASREGS) are compositionally biased toward basic and acidic residues. Asn-301 is a glycosylation site (N-linked (GlcNAc...) asparagine). 7 helical membrane passes run 513–532 (WLNG…GRIY), 556–576 (IMTW…MDLV), 597–617 (IVNN…FIMA), 635–655 (YFSL…VGAF), 681–701 (GGIV…ASVL), 708–728 (IITS…ILMV), and 812–832 (VLVC…TATG). Asn-840 is a glycosylation site (N-linked (GlcNAc...) asparagine). A helical transmembrane segment spans residues 852-872 (VILWITAGLSLFRFIGSLWFL).

It belongs to the chitin synthase family. Class III subfamily.

The protein localises to the cell membrane. It catalyses the reaction [(1-&gt;4)-N-acetyl-beta-D-glucosaminyl](n) + UDP-N-acetyl-alpha-D-glucosamine = [(1-&gt;4)-N-acetyl-beta-D-glucosaminyl](n+1) + UDP + H(+). In terms of biological role, polymerizes chitin, a structural polymer of the cell wall and septum, by transferring the sugar moiety of UDP-GlcNAc to the non-reducing end of the growing chitin polymer. Plays an important role in septal growth or maintenance. Mediates colony spore formation. ChsE and chsD seem to play a functionally redundant role in lateral cell wall chitin synthesis. Involved in resistance to echinocandins. In Aspergillus niger (strain ATCC MYA-4892 / CBS 513.88 / FGSC A1513), this protein is Chitin synthase E.